The sequence spans 220 residues: Cytidylate kinase (220 aa).

Residue 9–17 (GPAASGKST) participates in ATP binding.

Belongs to the cytidylate kinase family. Type 1 subfamily.

The protein resides in the cytoplasm. It carries out the reaction CMP + ATP = CDP + ADP. It catalyses the reaction dCMP + ATP = dCDP + ADP. In Thermotoga sp. (strain RQ2), this protein is Cytidylate kinase.